The chain runs to 207 residues: Large ribosomal subunit protein bL25 (207 aa).

The protein belongs to the bacterial ribosomal protein bL25 family. CTC subfamily. As to quaternary structure, part of the 50S ribosomal subunit; part of the 5S rRNA/L5/L18/L25 subcomplex. Contacts the 5S rRNA. Binds to the 5S rRNA independently of L5 and L18.

Functionally, this is one of the proteins that binds to the 5S RNA in the ribosome where it forms part of the central protuberance. This is Large ribosomal subunit protein bL25 from Dictyoglomus turgidum (strain DSM 6724 / Z-1310).